We begin with the raw amino-acid sequence, 408 residues long: Voltage-gated potassium channel subunit beta-1 (408 aa).

NADP(+) contacts are provided by threonine 97, tryptophan 98, glutamine 104, and aspartate 126. Tyrosine 131 (proton donor/acceptor) is an active-site residue. Residues asparagine 199, serine 229, arginine 230, glutamine 255, tryptophan 284, serine 285, proline 286, leucine 287, alanine 288, cysteine 289, lysine 295, arginine 305, glycine 364, serine 366, glutamine 370, glutamate 373, and asparagine 374 each contribute to the NADP(+) site.

Belongs to the shaker potassium channel beta subunit family. In terms of assembly, homotetramer. Interaction with tetrameric potassium channel alpha subunits gives rise to a heterooctamer. Identified in potassium channel complexes containing KCNA1, KCNA2, KCNA4, KCNA5, KCNA6, KCNAB1 and KCNAB2. Part of a complex containing KCNA1, KCNA4 and LGI1; interaction with LGI1 inhibits down-regulation of KCNA1 channel activity. Interacts with the dimer formed by GNB1 and GNG2; this enhances KCNA1 binding. Interacts with SQSTM1. In terms of tissue distribution, expression most abundant in aorta. Also high in left ventricle. Also detected in right ventricle, atrium, brain, skeletal muscle and kidney. Not detected in liver.

It localises to the cytoplasm. It is found in the membrane. Its subcellular location is the cell membrane. The enzyme catalyses a primary alcohol + NADP(+) = an aldehyde + NADPH + H(+). It carries out the reaction a secondary alcohol + NADP(+) = a ketone + NADPH + H(+). Functionally, regulatory subunit of the voltage-gated potassium (Kv) Shaker channels composed of pore-forming and potassium-conducting alpha subunits and of regulatory beta subunits. The beta-1/KCNAB1 cytoplasmic subunit mediates closure of delayed rectifier potassium channels by physically obstructing the pore via its N-terminal domain and increases the speed of channel closure for other family members. Promotes the inactivation of Kv1.1/KCNA1, Kv1.2/KCNA2, Kv1.4/KCNA4, Kv1.5/KCNA5 and Kv1.6/KCNA6 alpha subunit-containing channels. Displays nicotinamide adenine dinucleotide phosphate (NADPH)-dependent aldoketoreductase activity by catalyzing the NADPH-dependent reduction of a variety of endogenous aldehydes and ketones. The binding of NADPH is required for efficient down-regulation of potassium channel activity. Oxidation of the bound NADPH restrains N-terminal domain from blocking the channel, thereby decreasing N-type inactivation of potassium channel activity. The polypeptide is Voltage-gated potassium channel subunit beta-1 (KCNAB1) (Mustela putorius (European polecat)).